The primary structure comprises 327 residues: Flap endonuclease 1 (327 aa).

Positions 1–100 (MGNADLRQLA…DEIADRREQR (100 aa)) are N-domain. Asp28, Asp82, Glu154, Glu156, Asp176, Asp178, and Asp226 together coordinate Mg(2+). Residues 118-247 (EAARLDARTQ…TALDAIGEHG (130 aa)) form an I-domain region. The segment at 319 to 327 (AQTGLDRWT) is interaction with PCNA.

This sequence belongs to the XPG/RAD2 endonuclease family. FEN1 subfamily. As to quaternary structure, interacts with PCNA. PCNA stimulates the nuclease activity without altering cleavage specificity. It depends on Mg(2+) as a cofactor.

Structure-specific nuclease with 5'-flap endonuclease and 5'-3' exonuclease activities involved in DNA replication and repair. During DNA replication, cleaves the 5'-overhanging flap structure that is generated by displacement synthesis when DNA polymerase encounters the 5'-end of a downstream Okazaki fragment. Binds the unpaired 3'-DNA end and kinks the DNA to facilitate 5' cleavage specificity. Cleaves one nucleotide into the double-stranded DNA from the junction in flap DNA, leaving a nick for ligation. Also involved in the base excision repair (BER) pathway. Acts as a genome stabilization factor that prevents flaps from equilibrating into structures that lead to duplications and deletions. Also possesses 5'-3' exonuclease activity on nicked or gapped double-stranded DNA. This Halobacterium salinarum (strain ATCC 29341 / DSM 671 / R1) protein is Flap endonuclease 1.